The chain runs to 348 residues: Centromere protein N-A (348 aa).

This sequence belongs to the CENP-N/CHL4 family.

The protein localises to the nucleus. It localises to the chromosome. It is found in the centromere. Functionally, probable component of a centromeric complex involved in assembly of kinetochore proteins, mitotic progression and chromosome segregation. The protein is Centromere protein N-A (cenpn-a) of Xenopus laevis (African clawed frog).